Consider the following 909-residue polypeptide: ABC transporter B family member 1 (909 aa).

The tract at residues 1 to 36 is disordered; that stretch reads MTKKNFNDEENESLLETYNKQQQKQSISTTNRSDQK. The span at 14–36 shows a compositional bias: polar residues; it reads LLETYNKQQQKQSISTTNRSDQK. A helical membrane pass occupies residues 85 to 105; that stretch reads LFIQIVSLVILAGYLISINAL. The span at 125–134 shows a compositional bias: low complexity; that stretch reads TDSGSVSPTS. Residues 125–147 form a disordered region; the sequence is TDSGSVSPTSTPSPTPTPTPSPT. Residues 135-145 are compositionally biased toward pro residues; it reads TPSPTPTPTPS. 8 helical membrane passes run 182 to 202, 206 to 226, 275 to 295, 347 to 367, 392 to 412, 480 to 500, 572 to 592, and 607 to 627; these read FSTF…LLLI, SFIY…YNVI, IIIV…VLHI, LPII…SLAM, LALV…SWLF, VILL…IVPV, GVFS…IVYV, and LTSF…ISSL. The ABC transmembrane type-1 domain occupies 350–633; that stretch reads ILAAMVALVF…ISSLMTDFLK (284 aa). The ABC transporter domain maps to 666–902; sequence IELKDVEFSY…TDGIYHNLVK (237 aa). Position 701-708 (701-708) interacts with ATP; that stretch reads GPSGGGKS.

It belongs to the ABC transporter superfamily. ABCB family.

It is found in the membrane. This chain is ABC transporter B family member 1 (abcB1), found in Dictyostelium discoideum (Social amoeba).